The chain runs to 207 residues: Neuroendocrine protein 7B2 (207 aa).

The N-terminal stretch at 1-22 (MVSTMLSGLVLWLTFGWTPALA) is a signal peptide. A disulfide bridge links Cys-116 with Cys-125. Ser-136 and Ser-200 each carry phosphoserine. Residues 168–207 (KGGQRRKRRSVNPYLQGQRLDNVVAKKSVPHFSDEDKDPE) form a disordered region.

This sequence belongs to the 7B2 family. In terms of assembly, interacts with PCSK2/PC2 early in the secretory pathway. Dissociation occurs at later stages. Post-translationally, proteolytically cleaved in the Golgi by a furin-like convertase to generate bioactive peptides. In terms of processing, sulfated on tyrosine residues.

The protein localises to the secreted. In terms of biological role, acts as a molecular chaperone for PCSK2/PC2, preventing its premature activation in the regulated secretory pathway. Binds to inactive PCSK2 in the endoplasmic reticulum and facilitates its transport from there to later compartments of the secretory pathway where it is proteolytically matured and activated. Also required for cleavage of PCSK2 but does not appear to be involved in its folding. Plays a role in regulating pituitary hormone secretion. The C-terminal peptide inhibits PCSK2 in vitro. The protein is Neuroendocrine protein 7B2 (SCG5) of Sus scrofa (Pig).